A 373-amino-acid polypeptide reads, in one-letter code: ATP synthase gamma chain 1, chloroplastic (373 aa).

The N-terminal 50 residues, 1 to 50, are a transit peptide targeting the chloroplast; the sequence is MACSNLTTMWVSSKPSLSADSSSLSFRSVLKCPTNTSSPPSRASSVSPLQ. C139 is an active-site residue. Cysteines 249 and 255 form a disulfide. S347 is subject to Phosphoserine.

Belongs to the ATPase gamma chain family. F-type ATPases have 2 components, CF(1) - the catalytic core - and CF(0) - the membrane proton channel. CF(1) has five subunits: alpha(3), beta(3), gamma(1), delta(1), epsilon(1). CF(0) has four main subunits: a, b, b' and c. Interacts with PAB.

The protein localises to the plastid. The protein resides in the chloroplast thylakoid membrane. Functionally, produces ATP from ADP in the presence of a proton gradient across the membrane. The gamma chain is believed to be important in regulating ATPase activity and the flow of protons through the CF(0) complex. This Arabidopsis thaliana (Mouse-ear cress) protein is ATP synthase gamma chain 1, chloroplastic (ATPC1).